A 330-amino-acid polypeptide reads, in one-letter code: 4-hydroxythreonine-4-phosphate dehydrogenase (330 aa).

Substrate is bound by residues His136 and Thr137. 3 residues coordinate a divalent metal cation: His166, His211, and His266. The substrate site is built by Lys274, Asn283, and Arg292.

Belongs to the PdxA family. In terms of assembly, homodimer. Zn(2+) is required as a cofactor. Mg(2+) serves as cofactor. The cofactor is Co(2+).

Its subcellular location is the cytoplasm. The enzyme catalyses 4-(phosphooxy)-L-threonine + NAD(+) = 3-amino-2-oxopropyl phosphate + CO2 + NADH. The protein operates within cofactor biosynthesis; pyridoxine 5'-phosphate biosynthesis; pyridoxine 5'-phosphate from D-erythrose 4-phosphate: step 4/5. Catalyzes the NAD(P)-dependent oxidation of 4-(phosphooxy)-L-threonine (HTP) into 2-amino-3-oxo-4-(phosphooxy)butyric acid which spontaneously decarboxylates to form 3-amino-2-oxopropyl phosphate (AHAP). The sequence is that of 4-hydroxythreonine-4-phosphate dehydrogenase from Sodalis glossinidius (strain morsitans).